The chain runs to 549 residues: Eukaryotic translation initiation factor 3 subunit D (549 aa).

A disordered region spans residues 101-130 (QSYQRGRARGQRGRGARGARTPGGMTTLNK). Positions 106–117 (GRARGQRGRGAR) are enriched in basic residues. Positions 277-291 (EFDLLTVNETSVEPP) are RNA gate. The interval 521–549 (ESDASEESGDEQADTPFAPLYSYGNSKRV) is disordered. Acidic residues predominate over residues 523-533 (DASEESGDEQA).

It belongs to the eIF-3 subunit D family. Component of the eukaryotic translation initiation factor 3 (eIF-3) complex.

It localises to the cytoplasm. Its function is as follows. mRNA cap-binding component of the eukaryotic translation initiation factor 3 (eIF-3) complex, which is involved in protein synthesis of a specialized repertoire of mRNAs and, together with other initiation factors, stimulates binding of mRNA and methionyl-tRNAi to the 40S ribosome. The eIF-3 complex specifically targets and initiates translation of a subset of mRNAs involved in cell proliferation. In the eIF-3 complex, eif3d specifically recognizes and binds the 7-methylguanosine cap of a subset of mRNAs. This is Eukaryotic translation initiation factor 3 subunit D from Bombyx mori (Silk moth).